A 513-amino-acid polypeptide reads, in one-letter code: MEMAFEQELILVLDFGSQYNQLITRRIREMGVYSELHDHEISIEEIKKMNPKGIILSGGPNSVYEEGSFTVDPEIFNLGVPVMGICYGMQLMTKLLGGSVERANEREYGKAVIKAETHSLFTKLPEEQTVWMSHSDKVINLPEGFNVIAHSPSCKYAAIENPERNLYGVQFHPEVRHSEYGNDLLRNFIREICKCTGEWTMENFIEIEIEKIREKVGDRKVICAMSGGVDSSVVAVLIHKAIGDQLTCIFVDHGLLRKGEGDMVMKQFGEGFNMNIIRVDAKERFMSKLAGVSDPEQKRKIIGNEFVYLFDEEAAKLKDADFLAQGTLYTDIIESGTKTAQTIKSHHNVGGLPEDMQFELIEPVNTLFKDEVRALGIELGIPEHLVWRQPFPGPGLGIRVLGEITEEKLEIVRESDAILREVIAEEGLERDIWQYFTVLPDIRSVGVMGDYRTYDYTVGVRAVTSIDGMTSDFARIDWEVLQKVSSRIVNEVDHVNRVVYDITSKPPSTIEWE.

One can recognise a Glutamine amidotransferase type-1 domain in the interval 9 to 198 (LILVLDFGSQ…IREICKCTGE (190 aa)). Residue Cys-86 is the Nucleophile of the active site. Active-site residues include His-172 and Glu-174. In terms of domain architecture, GMPS ATP-PPase spans 199 to 388 (WTMENFIEIE…LGIPEHLVWR (190 aa)). 226–232 (SGGVDSS) contributes to the ATP binding site.

In terms of assembly, homodimer.

It carries out the reaction XMP + L-glutamine + ATP + H2O = GMP + L-glutamate + AMP + diphosphate + 2 H(+). Its pathway is purine metabolism; GMP biosynthesis; GMP from XMP (L-Gln route): step 1/1. In terms of biological role, catalyzes the synthesis of GMP from XMP. This is GMP synthase [glutamine-hydrolyzing] from Macrococcus caseolyticus (strain JCSC5402) (Macrococcoides caseolyticum).